We begin with the raw amino-acid sequence, 480 residues long: Caspase-8 (480 aa).

A propeptide spanning residues 1–218 (MDFQSCLYAI…ELCDSPREQD (218 aa)) is cleaved from the precursor. DED domains follow at residues 3–80 (FQSC…NFLD) and 101–177 (YRVM…KIED). 2 positions are modified to phosphoserine: Ser-188 and Ser-213. N6-acetyllysine is present on Lys-226. His-319 is an active-site residue. The residue at position 336 (Tyr-336) is a Phosphotyrosine. Cys-362 is a catalytic residue. The propeptide occupies 377-387 (FEQQNHTLEVD). The residue at position 389 (Ser-389) is a Phosphoserine; by CDK1.

Belongs to the peptidase C14A family. Heterotetramer that consists of two anti-parallel arranged heterodimers, each one formed by a 18 kDa (p18) and a 10 kDa (p10) subunit. Component of the death-induced signaling complex (DISC) composed of cell surface receptor FAS/CD95 or TNFRSF1A, adapter protein FADD and the CASP8 protease; recruitment of CASP8 to the complex is required for processing of CASP8 into the p18 and p10 subunits. Component of the AIM2 PANoptosome complex, a multiprotein complex that drives inflammatory cell death (PANoptosis). Interacts with CFLAR and PEA15. Interacts with RFFL and RNF34; negatively regulate CASP8 through proteasomal degradation. Interacts with TNFAIP8L2. Interacts with CASP8AP2. Interacts with NOL3; decreases CASP8 activity in a mitochondria localization- and phosphorylation-dependent manner and this interaction is dissociated by calcium. Interacts with UBR2. Interacts with RIPK1. Interacts with stimulated TNFRSF10B; this interaction is followed by CASP8 proteolytic cleavage and activation. Generation of the subunits requires association with the death-inducing signaling complex (DISC), whereas additional processing is likely due to the autocatalytic activity of the activated protease. GZMB and CASP10 can be involved in these processing events. In terms of processing, (Microbial infection) Proteolytically cleaved by the cowpox virus CRMA death inhibitory protein. Post-translationally, phosphorylation on Ser-389 during mitosis by CDK1 inhibits activation by proteolysis and prevents apoptosis. This phosphorylation occurs in cancer cell lines, as well as in primary breast tissues and lymphocytes. In terms of tissue distribution, expressed in a wide variety of tissues. Highest expression in spleen, thymus, lung, liver and kidney. Lower expression in heart, brain, testis and skeletal muscle.

The protein resides in the cytoplasm. It localises to the nucleus. It carries out the reaction Strict requirement for Asp at position P1 and has a preferred cleavage sequence of (Leu/Asp/Val)-Glu-Thr-Asp-|-(Gly/Ser/Ala).. With respect to regulation, CASP8 activity is restricted by RIPK1. Its activity is regulated as follows. (Microbial infection) Inhibited by baculovirus p35 protein P35. Its function is as follows. Thiol protease that plays a key role in programmed cell death by acting as a molecular switch for apoptosis, necroptosis and pyroptosis, and is required to prevent tissue damage during embryonic development and adulthood. Initiator protease that induces extrinsic apoptosis by mediating cleavage and activation of effector caspases responsible for FAS/CD95-mediated and TNFRSF1A-induced cell death. Cleaves and activates effector caspases CASP3, CASP4, CASP6, CASP7, CASP9 and CASP10. Binding to the adapter molecule FADD recruits it to either receptor FAS/CD95 or TNFRSF1A. The resulting aggregate called the death-inducing signaling complex (DISC) performs CASP8 proteolytic activation. The active dimeric enzyme is then liberated from the DISC and free to activate downstream apoptotic proteases. Proteolytic fragments of the N-terminal propeptide (termed CAP3, CAP5 and CAP6) are likely retained in the DISC. In addition to extrinsic apoptosis, also acts as a negative regulator of necroptosis: acts by cleaving RIPK1 at 'Asp-325', which is crucial to inhibit RIPK1 kinase activity, limiting TNF-induced apoptosis, necroptosis and inflammatory response. Also able to initiate pyroptosis by mediating cleavage and activation of gasdermin-C and -D (GSDMC and GSDMD, respectively): gasdermin cleavage promotes release of the N-terminal moiety that binds to membranes and forms pores, triggering pyroptosis. Initiates pyroptosis following inactivation of MAP3K7/TAK1. Also acts as a regulator of innate immunity by mediating cleavage and inactivation of N4BP1 downstream of TLR3 or TLR4, thereby promoting cytokine production. May participate in the Granzyme B (GZMB) cell death pathways. Cleaves PARP1 and PARP2. This chain is Caspase-8, found in Mus musculus (Mouse).